A 58-amino-acid chain; its full sequence is Single-pass membrane and coiled-coil domain-containing protein 4 homolog (58 aa).

A coiled-coil region spans residues 1 to 31 (MRQLKGKVKETRKQKKERKLDNLETQAKIRT). Residues 31 to 51 (TVVLPALGVLAVFLVLFVYLK) traverse the membrane as a helical segment.

Belongs to the SMCO4 family.

The protein localises to the membrane. In Drosophila melanogaster (Fruit fly), this protein is Single-pass membrane and coiled-coil domain-containing protein 4 homolog.